The sequence spans 308 residues: Inactive C-alpha-formylglycine-generating enzyme 2 (308 aa).

Residues 1 to 33 (MRSEFWFPSMGSLLPPVLLLWLLSCPRLQLGHA) form the signal peptide. Cys-163 and Cys-297 form a disulfide bridge. Asn-198 carries N-linked (GlcNAc...) asparagine glycosylation. The Ca(2+) site is built by Asn-201, Leu-202, Asp-215, Phe-217, Asp-236, Gly-239, Val-241, and Glu-243. Over residues 281–291 (RMGNTPDSASD) the composition is skewed to polar residues. The disordered stretch occupies residues 281 to 308 (RMGNTPDSASDNLGFRCASSAGRPKEDL). The Non-canonical ER retention motif motif lies at 305–308 (KEDL).

This sequence belongs to the sulfatase-modifying factor family. As to quaternary structure, homodimer and heterodimer with SUMF1.

The protein localises to the endoplasmic reticulum lumen. Functionally, lacks formylglycine generating activity and is unable to convert newly synthesized inactive sulfatases to their active form. Inhibits the activation of sulfatases by SUMF1. This Mus musculus (Mouse) protein is Inactive C-alpha-formylglycine-generating enzyme 2.